The primary structure comprises 34 residues: Photosystem II reaction center protein M (34 aa).

A helical transmembrane segment spans residues 5–25 (ILAFIATALFILVPTAFLLII).

The protein belongs to the PsbM family. PSII is composed of 1 copy each of membrane proteins PsbA, PsbB, PsbC, PsbD, PsbE, PsbF, PsbH, PsbI, PsbJ, PsbK, PsbL, PsbM, PsbT, PsbX, PsbY, PsbZ, Psb30/Ycf12, at least 3 peripheral proteins of the oxygen-evolving complex and a large number of cofactors. It forms dimeric complexes.

The protein localises to the plastid. It localises to the chloroplast thylakoid membrane. In terms of biological role, one of the components of the core complex of photosystem II (PSII). PSII is a light-driven water:plastoquinone oxidoreductase that uses light energy to abstract electrons from H(2)O, generating O(2) and a proton gradient subsequently used for ATP formation. It consists of a core antenna complex that captures photons, and an electron transfer chain that converts photonic excitation into a charge separation. This subunit is found at the monomer-monomer interface. The sequence is that of Photosystem II reaction center protein M from Phaseolus vulgaris (Kidney bean).